A 464-amino-acid polypeptide reads, in one-letter code: ATP synthase subunit beta (464 aa).

153–160 (GGAGVGKT) is a binding site for ATP.

The protein belongs to the ATPase alpha/beta chains family. F-type ATPases have 2 components, CF(1) - the catalytic core - and CF(0) - the membrane proton channel. CF(1) has five subunits: alpha(3), beta(3), gamma(1), delta(1), epsilon(1). CF(0) has three main subunits: a(1), b(2) and c(9-12). The alpha and beta chains form an alternating ring which encloses part of the gamma chain. CF(1) is attached to CF(0) by a central stalk formed by the gamma and epsilon chains, while a peripheral stalk is formed by the delta and b chains.

It is found in the cell membrane. The enzyme catalyses ATP + H2O + 4 H(+)(in) = ADP + phosphate + 5 H(+)(out). In terms of biological role, produces ATP from ADP in the presence of a proton gradient across the membrane. The catalytic sites are hosted primarily by the beta subunits. The polypeptide is ATP synthase subunit beta (Alkaliphilus metalliredigens (strain QYMF)).